Reading from the N-terminus, the 206-residue chain is Ras-related protein Rab7 (206 aa).

Residues 15–22 (GDSGVGKT), 63–67 (DTAGQ), and 125–128 (NKVD) each bind GTP. Residues Cys205 and Cys206 are each lipidated (S-geranylgeranyl cysteine).

It belongs to the small GTPase superfamily. Rab family.

It is found in the cell membrane. Protein transport. Probably involved in vesicular traffic. In Cenchrus ciliaris (Buffelgrass), this protein is Ras-related protein Rab7.